Reading from the N-terminus, the 932-residue chain is Protocadherin gamma-A2 (932 aa).

An N-terminal signal peptide occupies residues 1–28 (MAALQKLPHCRKLVLLCFLLATLWEARA). 6 Cadherin domains span residues 29–133 (GQIR…APRF), 134–242 (GVEE…APVF), 243–347 (TQPE…APEF), 348–452 (YMTS…APAF), 453–562 (SRTS…APEI), and 570–682 (DGST…EPSA). The Extracellular segment spans residues 29–692 (GQIRYSVREE…IPNDSDLTLY (664 aa)). N-linked (GlcNAc...) asparagine glycans are attached at residues Asn-419 and Asn-545. Asn-685 carries an N-linked (GlcNAc...) asparagine glycan. The chain crosses the membrane as a helical span at residues 693-713 (LVVAVAAVSCVFLAFVIVLLA). The Cytoplasmic segment spans residues 714–932 (HRLRRWHKSR…KKKSGKKEKK (219 aa)). Disordered stretches follow at residues 798-841 (LEEE…WPNN) and 902-932 (ATLTNAAGKRDGKAPAGGNGNKKKSGKKEKK). A compositionally biased stretch (polar residues) spans 806 to 841 (FSQQAPPNTDWRFSQAQRPGTSGSQNGDDTGTWPNN). The span at 922–932 (NKKKSGKKEKK) shows a compositional bias: basic residues.

The protein localises to the cell membrane. Functionally, potential calcium-dependent cell-adhesion protein. May be involved in the establishment and maintenance of specific neuronal connections in the brain. This is Protocadherin gamma-A2 (PCDHGA2) from Homo sapiens (Human).